The following is a 269-amino-acid chain: MRKALKDSKRIVVKVGTSTLTYENGSVNLMRIEKLSRVISDICNMGKEVVLVSSGAIGVGVGKLRLEKKPETIREKQAVAAVGQCALMHIYNKFFGEYSHVVAQVLLTRDVLENERMKNNVCNTFDTLLEKGIIPIVNENDAISIDEIQNILNFGDNDNLSAIVSTLVNADTLIILSDIDGFYDSDPRTNEDSKMLKEVYEITPEIEECAGGAGSNRGTGGMVTKLSAAKVATSNGIDMILANGENPEILIDILNGEDIGTMFVAKKGE.

Lys-14 contributes to the ATP binding site. Residues Ser-54, Asp-141, and Asn-157 each contribute to the substrate site. Residues 177–178 (SD) and 219–225 (TGGMVTK) each bind ATP.

Belongs to the glutamate 5-kinase family.

It localises to the cytoplasm. The catalysed reaction is L-glutamate + ATP = L-glutamyl 5-phosphate + ADP. The protein operates within amino-acid biosynthesis; L-proline biosynthesis; L-glutamate 5-semialdehyde from L-glutamate: step 1/2. Catalyzes the transfer of a phosphate group to glutamate to form L-glutamate 5-phosphate. This Clostridium perfringens (strain 13 / Type A) protein is Glutamate 5-kinase.